We begin with the raw amino-acid sequence, 630 residues long: tRNA uridine 5-carboxymethylaminomethyl modification enzyme MnmG (630 aa).

FAD is bound at residue 13–18; the sequence is GGGHAG. Residue 273–287 coordinates NAD(+); that stretch reads GPRYCPSIEDKVNRF.

The protein belongs to the MnmG family. Homodimer. Heterotetramer of two MnmE and two MnmG subunits. It depends on FAD as a cofactor.

It is found in the cytoplasm. Functionally, NAD-binding protein involved in the addition of a carboxymethylaminomethyl (cmnm) group at the wobble position (U34) of certain tRNAs, forming tRNA-cmnm(5)s(2)U34. In Teredinibacter turnerae (strain ATCC 39867 / T7901), this protein is tRNA uridine 5-carboxymethylaminomethyl modification enzyme MnmG.